A 106-amino-acid polypeptide reads, in one-letter code: NADH-quinone oxidoreductase subunit K (106 aa).

Transmembrane regions (helical) follow at residues 8 to 28 (IGIENYIYLCVVLFCIGIFGV), 35 to 55 (IIMFMSIEIMLNAVNLLFVAF), and 66 to 86 (VFVFFSMAVAAAEVAVGLAIL).

This sequence belongs to the complex I subunit 4L family. As to quaternary structure, NDH-1 is composed of 14 different subunits. Subunits NuoA, H, J, K, L, M, N constitute the membrane sector of the complex.

The protein resides in the cell inner membrane. It catalyses the reaction a quinone + NADH + 5 H(+)(in) = a quinol + NAD(+) + 4 H(+)(out). Its function is as follows. NDH-1 shuttles electrons from NADH, via FMN and iron-sulfur (Fe-S) centers, to quinones in the respiratory chain. The immediate electron acceptor for the enzyme in this species is believed to be a menaquinone. Couples the redox reaction to proton translocation (for every two electrons transferred, four hydrogen ions are translocated across the cytoplasmic membrane), and thus conserves the redox energy in a proton gradient. The protein is NADH-quinone oxidoreductase subunit K of Flavobacterium psychrophilum (strain ATCC 49511 / DSM 21280 / CIP 103535 / JIP02/86).